The chain runs to 401 residues: NADH-quinone oxidoreductase subunit D 2 (401 aa).

Belongs to the complex I 49 kDa subunit family. In terms of assembly, NDH-1 is composed of 14 different subunits. Subunits NuoB, C, D, E, F, and G constitute the peripheral sector of the complex.

It localises to the cell inner membrane. It catalyses the reaction a quinone + NADH + 5 H(+)(in) = a quinol + NAD(+) + 4 H(+)(out). In terms of biological role, NDH-1 shuttles electrons from NADH, via FMN and iron-sulfur (Fe-S) centers, to quinones in the respiratory chain. The immediate electron acceptor for the enzyme in this species is believed to be ubiquinone. Couples the redox reaction to proton translocation (for every two electrons transferred, four hydrogen ions are translocated across the cytoplasmic membrane), and thus conserves the redox energy in a proton gradient. The chain is NADH-quinone oxidoreductase subunit D 2 from Thermodesulfovibrio yellowstonii (strain ATCC 51303 / DSM 11347 / YP87).